Reading from the N-terminus, the 222-residue chain is UPF0688 protein C1orf174 homolog (222 aa).

Disordered regions lie at residues 23 to 57 (STSL…RTSK) and 98 to 158 (EDGA…EPVP). The segment covering 33–48 (ASSTSAKTTCLASSSH) has biased composition (polar residues). The span at 121–131 (VSEEPSVKAEE) shows a compositional bias: basic and acidic residues. Position 172 is a phosphoserine (Ser172).

The protein belongs to the UPF0688 family.

The protein localises to the nucleus. The chain is UPF0688 protein C1orf174 homolog from Rattus norvegicus (Rat).